The primary structure comprises 537 residues: Chaperonin GroEL (537 aa).

Residues 29-32 (TLGP), 86-90 (DGTTT), glycine 413, and aspartate 492 contribute to the ATP site.

It belongs to the chaperonin (HSP60) family. In terms of assembly, forms a cylinder of 14 subunits composed of two heptameric rings stacked back-to-back. Interacts with the co-chaperonin GroES.

Its subcellular location is the cytoplasm. The catalysed reaction is ATP + H2O + a folded polypeptide = ADP + phosphate + an unfolded polypeptide.. Together with its co-chaperonin GroES, plays an essential role in assisting protein folding. The GroEL-GroES system forms a nano-cage that allows encapsulation of the non-native substrate proteins and provides a physical environment optimized to promote and accelerate protein folding. The polypeptide is Chaperonin GroEL (Dehalococcoides mccartyi (strain CBDB1)).